A 107-amino-acid chain; its full sequence is uncharacterized protein (107 aa).

A disordered region spans residues 1-32 (MDSLASGRWRRRRTEELPAAGDAKRACRRSEP). A compositionally biased stretch (basic and acidic residues) spans 22–31 (DAKRACRRSE).

This is an uncharacterized protein from Mus musculus (Mouse).